Here is a 102-residue protein sequence, read N- to C-terminus: NADH-quinone oxidoreductase subunit K (102 aa).

3 consecutive transmembrane segments (helical) span residues 5-25 (LGHFLSLGAMLFALSVIGIFL), 31-51 (IVLLMAIELMLLAVNTNFVAF), and 62-82 (IFVFFILTVAAAESAIGLAIL).

It belongs to the complex I subunit 4L family. As to quaternary structure, NDH-1 is composed of 14 different subunits. Subunits NuoA, H, J, K, L, M, N constitute the membrane sector of the complex.

It is found in the cell inner membrane. The catalysed reaction is a quinone + NADH + 5 H(+)(in) = a quinol + NAD(+) + 4 H(+)(out). Its function is as follows. NDH-1 shuttles electrons from NADH, via FMN and iron-sulfur (Fe-S) centers, to quinones in the respiratory chain. The immediate electron acceptor for the enzyme in this species is believed to be ubiquinone. Couples the redox reaction to proton translocation (for every two electrons transferred, four hydrogen ions are translocated across the cytoplasmic membrane), and thus conserves the redox energy in a proton gradient. This chain is NADH-quinone oxidoreductase subunit K, found in Albidiferax ferrireducens (strain ATCC BAA-621 / DSM 15236 / T118) (Rhodoferax ferrireducens).